A 470-amino-acid polypeptide reads, in one-letter code: Uronate isomerase (470 aa).

The protein belongs to the metallo-dependent hydrolases superfamily. Uronate isomerase family.

It carries out the reaction D-glucuronate = D-fructuronate. It catalyses the reaction aldehydo-D-galacturonate = keto-D-tagaturonate. Its pathway is carbohydrate metabolism; pentose and glucuronate interconversion. The chain is Uronate isomerase from Sphingopyxis alaskensis (strain DSM 13593 / LMG 18877 / RB2256) (Sphingomonas alaskensis).